A 31-amino-acid polypeptide reads, in one-letter code: AGGKATCCPCFMCSYTAGCPWGQCAHHCGCD.

The protein belongs to the sea anemone short toxin (type III) family. In terms of processing, contains 4 disulfide bonds.

It localises to the secreted. Its subcellular location is the nematocyst. Its function is as follows. Binds specifically to voltage-gated sodium channels (Nav), thereby delaying their inactivation during signal transduction. This Dofleinia armata (Armed anemone) protein is Delta-actitoxin-Dar1b.